Reading from the N-terminus, the 66-residue chain is Large ribosomal subunit protein bL35 (66 aa).

The segment covering 1–26 has biased composition (basic residues); it reads MPKMKTHRGSAKRFKKTASGKLKRGH. Positions 1 to 28 are disordered; that stretch reads MPKMKTHRGSAKRFKKTASGKLKRGHAY.

Belongs to the bacterial ribosomal protein bL35 family.

This chain is Large ribosomal subunit protein bL35, found in Geobacillus thermodenitrificans (strain NG80-2).